The chain runs to 602 residues: Peptide-N(4)-(N-acetyl-beta-glucosaminyl)asparagine amidase (602 aa).

A Thioredoxin domain is found at P2 to G130. Zn(2+)-binding residues include C189, C192, C222, and C225. The active-site Nucleophile is the C248. Active-site residues include H275 and D292. The region spanning D400 to K602 is the PAW domain.

Belongs to the transglutaminase-like superfamily. PNGase family. Zn(2+) serves as cofactor.

The protein resides in the cytoplasm. Its subcellular location is the endoplasmic reticulum. The enzyme catalyses Hydrolysis of an N(4)-(acetyl-beta-D-glucosaminyl)asparagine residue in which the glucosamine residue may be further glycosylated, to yield a (substituted) N-acetyl-beta-D-glucosaminylamine and a peptide containing an aspartate residue.. Its function is as follows. Specifically deglycosylates the denatured form of N-linked glycoproteins in the cytoplasm and assists their proteasome-mediated degradation. Cleaves the beta-aspartyl-glucosamine (GlcNAc) of the glycan and the amide side chain of Asn, converting Asn to Asp. Prefers proteins containing high-mannose over those bearing complex type oligosaccharides. Can recognize misfolded proteins in the endoplasmic reticulum that are exported to the cytosol to be destroyed and deglycosylate them, while it has no activity toward native proteins. Deglycosylation is a prerequisite for subsequent proteasome-mediated degradation of some, but not all, misfolded glycoproteins. Also displays oxidoreductase (thioredoxin) activity. The chain is Peptide-N(4)-(N-acetyl-beta-glucosaminyl)asparagine amidase (png-1) from Caenorhabditis briggsae.